The following is a 119-amino-acid chain: NADH-quinone oxidoreductase subunit A (119 aa).

The next 3 membrane-spanning stretches (helical) occupy residues 7 to 27 (FPVL…VSIG), 63 to 83 (LVAI…PWGV), and 88 to 108 (IGWP…LGFA).

This sequence belongs to the complex I subunit 3 family. In terms of assembly, NDH-1 is composed of 14 different subunits. Subunits NuoA, H, J, K, L, M, N constitute the membrane sector of the complex.

The protein localises to the cell inner membrane. The catalysed reaction is a quinone + NADH + 5 H(+)(in) = a quinol + NAD(+) + 4 H(+)(out). Functionally, NDH-1 shuttles electrons from NADH, via FMN and iron-sulfur (Fe-S) centers, to quinones in the respiratory chain. The immediate electron acceptor for the enzyme in this species is believed to be ubiquinone. Couples the redox reaction to proton translocation (for every two electrons transferred, four hydrogen ions are translocated across the cytoplasmic membrane), and thus conserves the redox energy in a proton gradient. This chain is NADH-quinone oxidoreductase subunit A, found in Paraburkholderia phytofirmans (strain DSM 17436 / LMG 22146 / PsJN) (Burkholderia phytofirmans).